Consider the following 274-residue polypeptide: NH(3)-dependent NAD(+) synthetase (274 aa).

46-53 (GISGGQDS) lines the ATP pocket. Asp-52 provides a ligand contact to Mg(2+). Residue Arg-140 participates in deamido-NAD(+) binding. Thr-160 provides a ligand contact to ATP. Glu-165 contributes to the Mg(2+) binding site. Deamido-NAD(+) is bound by residues Lys-173 and Asp-180. Lys-189 and Thr-211 together coordinate ATP. 260-261 (HK) contacts deamido-NAD(+).

It belongs to the NAD synthetase family. Homodimer.

It carries out the reaction deamido-NAD(+) + NH4(+) + ATP = AMP + diphosphate + NAD(+) + H(+). Its pathway is cofactor biosynthesis; NAD(+) biosynthesis; NAD(+) from deamido-NAD(+) (ammonia route): step 1/1. Its function is as follows. Catalyzes the ATP-dependent amidation of deamido-NAD to form NAD. Uses ammonia as a nitrogen source. The protein is NH(3)-dependent NAD(+) synthetase of Streptococcus equi subsp. zooepidemicus (strain H70).